The primary structure comprises 274 residues: Ribose-5-phosphate isomerase (274 aa).

Belongs to the ribose 5-phosphate isomerase family.

The protein localises to the cytoplasm. It catalyses the reaction aldehydo-D-ribose 5-phosphate = D-ribulose 5-phosphate. Its pathway is carbohydrate degradation; pentose phosphate pathway; D-ribose 5-phosphate from D-ribulose 5-phosphate (non-oxidative stage): step 1/1. The chain is Ribose-5-phosphate isomerase (RKI1) from Kluyveromyces lactis (strain ATCC 8585 / CBS 2359 / DSM 70799 / NBRC 1267 / NRRL Y-1140 / WM37) (Yeast).